Consider the following 136-residue polypeptide: Large ribosomal subunit protein uL14 (136 aa).

It belongs to the universal ribosomal protein uL14 family.

The chain is Large ribosomal subunit protein uL14 (rpl23) from Dictyostelium discoideum (Social amoeba).